The primary structure comprises 51 residues: Large ribosomal subunit protein eL39 (51 aa).

This sequence belongs to the eukaryotic ribosomal protein eL39 family.

This is Large ribosomal subunit protein eL39 (rpl39e) from Pyrobaculum aerophilum (strain ATCC 51768 / DSM 7523 / JCM 9630 / CIP 104966 / NBRC 100827 / IM2).